The following is a 325-amino-acid chain: Tetraacyldisaccharide 4'-kinase (325 aa).

Threonine 55 to threonine 62 contributes to the ATP binding site.

It belongs to the LpxK family.

The catalysed reaction is a lipid A disaccharide + ATP = a lipid IVA + ADP + H(+). It participates in glycolipid biosynthesis; lipid IV(A) biosynthesis; lipid IV(A) from (3R)-3-hydroxytetradecanoyl-[acyl-carrier-protein] and UDP-N-acetyl-alpha-D-glucosamine: step 6/6. Functionally, transfers the gamma-phosphate of ATP to the 4'-position of a tetraacyldisaccharide 1-phosphate intermediate (termed DS-1-P) to form tetraacyldisaccharide 1,4'-bis-phosphate (lipid IVA). The polypeptide is Tetraacyldisaccharide 4'-kinase (Salmonella paratyphi C (strain RKS4594)).